The sequence spans 508 residues: MGRRNENCANSLRVSNISQENLSHWNLDSEVPVSENKNLPAGRDGAAGGKINKNYLEIPVEQLMLEPNLSVHSQKSTQNSKQGIFQLWNCPLNEGSTIEKREFKKSSVETGFNVINHPIRVFTLNHPLTIASVDKQVGPYPGLPMPLGLCWPYADGDFFKNRNEIHVSSCSTIENNDGETLPAPNWNLKHGNSSVEENFTDESDLSENEKTNDTLLSYFKKVDLNLKPETIKNVEEPFTEEPNEVFPYPDFLPPPFSALDLHNLALSKSDNWKVTVDPAETSVEHLITRLLELERLQHMTIQKERPRLQTTFCTPAVTERPSSSKATPKVRQPKLCDSLSLQIPCVDKSQEKSKNNSGSCKLEQNALKRNWSNAGKYRWNSRPLSLKSSSTPKQLIETYDKNPKSSILSPCQELSFKPTIGHTNQSMVKMVSTRCLPWRSPMPVSPIPLTFPENQKEEIKAPKRNFGTKKKLYRQNIVLNRPFSIQKLNCLSPSLIAKDKCCSPIEQK.

The protein belongs to the FAM217 family.

This Homo sapiens (Human) protein is Protein FAM217A (FAM217A).